The chain runs to 235 residues: Large ribosomal subunit protein uL1 (235 aa).

The protein belongs to the universal ribosomal protein uL1 family. Part of the 50S ribosomal subunit.

Binds directly to 23S rRNA. The L1 stalk is quite mobile in the ribosome, and is involved in E site tRNA release. Functionally, protein L1 is also a translational repressor protein, it controls the translation of the L11 operon by binding to its mRNA. This is Large ribosomal subunit protein uL1 from Methylibium petroleiphilum (strain ATCC BAA-1232 / LMG 22953 / PM1).